We begin with the raw amino-acid sequence, 111 residues long: Cell cycle protein GpsB (111 aa).

A coiled-coil region spans residues 38-72 (IKDYEAFHKEFDQLKQQNARLKRELEEQKVAATQV).

The protein belongs to the GpsB family. Forms polymers through the coiled coil domains. Interacts with PBP1, MreC and EzrA.

The protein resides in the cytoplasm. Divisome component that associates with the complex late in its assembly, after the Z-ring is formed, and is dependent on DivIC and PBP2B for its recruitment to the divisome. Together with EzrA, is a key component of the system that regulates PBP1 localization during cell cycle progression. Its main role could be the removal of PBP1 from the cell pole after pole maturation is completed. Also contributes to the recruitment of PBP1 to the division complex. Not essential for septum formation. The sequence is that of Cell cycle protein GpsB from Bacillus mycoides (strain KBAB4) (Bacillus weihenstephanensis).